A 504-amino-acid chain; its full sequence is 2,3-bisphosphoglycerate-independent phosphoglycerate mutase (504 aa).

Residues D9 and S59 each contribute to the Mn(2+) site. S59 acts as the Phosphoserine intermediate in catalysis. Substrate is bound by residues H120, 149–150, R181, R187, 253–256, and K326; these read RD and RPDR. Residues D393, H397, D434, H435, and H451 each contribute to the Mn(2+) site.

It belongs to the BPG-independent phosphoglycerate mutase family. Mn(2+) serves as cofactor.

It carries out the reaction (2R)-2-phosphoglycerate = (2R)-3-phosphoglycerate. It participates in carbohydrate degradation; glycolysis; pyruvate from D-glyceraldehyde 3-phosphate: step 3/5. Its function is as follows. Catalyzes the interconversion of 2-phosphoglycerate and 3-phosphoglycerate. The chain is 2,3-bisphosphoglycerate-independent phosphoglycerate mutase from Haloquadratum walsbyi (strain DSM 16790 / HBSQ001).